A 348-amino-acid chain; its full sequence is Uroporphyrinogen decarboxylase (348 aa).

Substrate is bound by residues 29–33, Asp79, Tyr155, Thr210, and His326; that span reads RQAGR.

It belongs to the uroporphyrinogen decarboxylase family. In terms of assembly, homodimer.

The protein localises to the cytoplasm. The catalysed reaction is uroporphyrinogen III + 4 H(+) = coproporphyrinogen III + 4 CO2. The protein operates within porphyrin-containing compound metabolism; protoporphyrin-IX biosynthesis; coproporphyrinogen-III from 5-aminolevulinate: step 4/4. In terms of biological role, catalyzes the decarboxylation of four acetate groups of uroporphyrinogen-III to yield coproporphyrinogen-III. This Rhodospirillum rubrum (strain ATCC 11170 / ATH 1.1.1 / DSM 467 / LMG 4362 / NCIMB 8255 / S1) protein is Uroporphyrinogen decarboxylase.